A 399-amino-acid chain; its full sequence is Galactokinase (399 aa).

Position 42-45 (42-45 (EHTD)) interacts with substrate. Residues S76 and 133–139 (ASGLSSS) each bind ATP. Residues S139 and E171 each contribute to the Mg(2+) site. D183 serves as the catalytic Proton acceptor. Y233 is a binding site for substrate.

This sequence belongs to the GHMP kinase family. GalK subfamily. In terms of assembly, monomer.

The protein localises to the cytoplasm. It catalyses the reaction alpha-D-galactose + ATP = alpha-D-galactose 1-phosphate + ADP + H(+). Its pathway is carbohydrate metabolism; galactose metabolism. Its function is as follows. Catalyzes the transfer of the gamma-phosphate of ATP to D-galactose to form alpha-D-galactose-1-phosphate (Gal-1-P). This chain is Galactokinase, found in Lactococcus lactis subsp. lactis (strain IL1403) (Streptococcus lactis).